Here is a 77-residue protein sequence, read N- to C-terminus: Protein OPG128 (77 aa).

This sequence belongs to the orthopoxvirus OPG128 family. Interacts with sulfhydryl oxidase OPG072; this interaction involves formation of a transient disulfide-bonded intermediate, allowing disulfide bond transfer. Interacts with OPG088; this interaction involves formation of a transient disulfide-bonded intermediate, allowing disulfide bond transfer.

Its function is as follows. Late protein which probably participates in disulfide bond formation by functioning as a thiol-disulfide transfer protein between membrane-associated OPG072 and OPG08. The complete pathway for formation of disulfide bonds in intracellular virion membrane proteins sequentially involves oxidation of OPG072, OPG128 and OPG08. This chain is Protein OPG128 (OPG128), found in Monkeypox virus.